The sequence spans 197 residues: uncharacterized protein (197 aa).

A helical transmembrane segment spans residues 11-31 (ICGFSLVALTIAGIVGGVYLV).

The protein resides in the membrane. This is an uncharacterized protein from Mycoplasma pneumoniae (strain ATCC 29342 / M129 / Subtype 1) (Mycoplasmoides pneumoniae).